The primary structure comprises 532 residues: MQLHISPSMRSITISSSNEFIDLMKIKVAARHISYRTLFHTILILAFLLPFVFILTAVVTLEGVNKCSSIDCLGRRIGPRLLGRVDDSERLARDFYKILNEVSTQEIPDGLKLPNSFSQLVSDMKNNHYDAKTFALVLRAMMEKFERDMRESKFAELMNKHFAASSIPKGIHCLSLRLTDEYSSNAHARRQLPSPEFLPVLSDNAYHHFILSTDNILAASVVVSSAVQSSSKPEKIVFHIITDKKTYAGMHSWFALNSVAPAIVEVKGVHQFDWLTRENVPVLEAVESHNGVRDYYHGNHVAGANLTETTPRTFASKLQSRSPKYISLLNHLRIYIPELFPNLDKVVFLDDDIVVQGDLTPLWDVDLGGKVNGAVETCRGEDEWVMSKRLRNYFNFSHPLIAKHLDPEECAWAYGMNIFDLQAWRKTNIRETYHSWLRENLKSNLTMWKLGTLPPALIAFKGHVHIIDSSWHMLGLGYQSKTNIENVKKAAVIHYNGQSKPWLEIGFEHLRPFWTKYVNYSNDFIKNCHILE.

Residues 1–40 are Cytoplasmic-facing; sequence MQLHISPSMRSITISSSNEFIDLMKIKVAARHISYRTLFH. Residues 41–61 traverse the membrane as a helical; Signal-anchor for type II membrane protein segment; that stretch reads TILILAFLLPFVFILTAVVTL. Topologically, residues 62-532 are lumenal; sequence EGVNKCSSID…DFIKNCHILE (471 aa). N305, N395, N444, and N519 each carry an N-linked (GlcNAc...) asparagine glycan.

Belongs to the glycosyltransferase 8 family. As to expression, expressed in roots, inflorescences, siliques, leaves and stems. Accumulates in pollen grains.

It is found in the golgi apparatus membrane. Its pathway is glycan metabolism; pectin biosynthesis. Functionally, may be involved in pectin and/or xylans biosynthesis in cell walls. Together with GAUT13, required for pollen tube growth, possibly through the regulation of pectin biosynthesis and repartition in the pollen tube wall. The protein is Probable galacturonosyltransferase 14 of Arabidopsis thaliana (Mouse-ear cress).